Reading from the N-terminus, the 314-residue chain is tRNA dimethylallyltransferase 1 (314 aa).

Residue 17-24 (GPTAAGKT) coordinates ATP. 19–24 (TAAGKT) is a binding site for substrate. The tract at residues 42–45 (DSRQ) is interaction with substrate tRNA.

Belongs to the IPP transferase family. In terms of assembly, monomer. The cofactor is Mg(2+).

It carries out the reaction adenosine(37) in tRNA + dimethylallyl diphosphate = N(6)-dimethylallyladenosine(37) in tRNA + diphosphate. In terms of biological role, catalyzes the transfer of a dimethylallyl group onto the adenine at position 37 in tRNAs that read codons beginning with uridine, leading to the formation of N6-(dimethylallyl)adenosine (i(6)A). The polypeptide is tRNA dimethylallyltransferase 1 (Syntrophotalea carbinolica (strain DSM 2380 / NBRC 103641 / GraBd1) (Pelobacter carbinolicus)).